Consider the following 207-residue polypeptide: Ras-related protein Rab-8A (207 aa).

GTP-binding residues include S17, G18, V19, G20, K21, T22, C23, S35, S39, and T40. Residue T22 participates in Mg(2+) binding. 2 consecutive short sequence motifs (switch) follow at residues 31-45 and 63-80; these read DAFNSTFISTIGIDF and DTAGQERFRTITTAYYRG. 2 residues coordinate Mg(2+): T40 and D63. GTP is bound at residue G66. T72 carries the post-translational modification Phosphothreonine. 5 residues coordinate GTP: N121, K122, D124, A152, and K153. Residues S181 and S185 each carry the phosphoserine modification. Position 204 is a cysteine methyl ester (C204). C204 carries the S-geranylgeranyl cysteine lipid modification. Residues 205-207 constitute a propeptide, removed in mature form; that stretch reads VLL.

This sequence belongs to the small GTPase superfamily. Rab family. As to quaternary structure, interacts (GTP-bound form) with MICALL1; regulates RAB8A association with recycling endosomes. Interacts with MICALL2; competes with RAB13 and is involved in E-cadherin endocytic recycling. Interacts (GTP-bound form) with MICAL1, MICALCL, MICAL3, EHBP1 and EHBP1L1; at least in case of MICAL1, MICALCL, MICAL3 and EHBP1L1 two molecules of RAB8A can bind to one molecule of the effector protein; ternary complexes of RAB8A, RAB13 and either MICAL1 or EHBP1L1 are possible. Interacts with EHD1. Interacts with MAP4K2 and SYTL4. Interacts with SGSM1 and SGSM3. Interacts with RABIF, RIMS2, RPH3A and RPH3A. Interacts with OPTN. Interacts with RAB3IP, RAB3IP functions as guanine exchange factor (GEF). Interacts with MYO5B. Interacts with CIMAP3. Interacts with BIRC6/bruce. Interacts with OCRL. Interacts with AHI1. Interacts with DCDC1. Interacts with LRRK2; interaction facilitates phosphorylation of Thr-72. Interacts with RAB31P, GDI1, GDI2, CHM, CHML, RABGGTA, RABGGTB, TBC1D15 and INPP5B; these interactions are dependent on Thr-72 not being phosphorylated. Interacts with RILPL1 and RILPL2; these interactions are dependent on the phosphorylation of Thr-72 by LRRK2. Interacts with DZIP1; prevents inhibition by the GDP-dissociation inhibitor GDI2. Interacts (in GDP-bound form) with RAB3IP/Rabin8, RAB3IP functions as guanine exchange factor (GEF) towards RAB8A. Interacts (in GDP-bound form) with RPGR, RPGR functions as GEF towards RAB8A. Requires Mg(2+) as cofactor. In terms of processing, phosphorylation of Thr-72 in the switch II region by LRRK2 prevents the association of RAB regulatory proteins, including CHM, CHML and RAB GDP dissociation inhibitors GDI1 and GDI2. Phosphorylation by LRRK2 is required for localization to stressed lysosomes.

It localises to the cell membrane. The protein resides in the golgi apparatus. It is found in the endosome membrane. Its subcellular location is the recycling endosome membrane. The protein localises to the cell projection. It localises to the cilium. The protein resides in the cytoplasmic vesicle. It is found in the phagosome membrane. Its subcellular location is the cytoplasm. The protein localises to the cytoskeleton. It localises to the microtubule organizing center. The protein resides in the centrosome. It is found in the centriole. Its subcellular location is the cilium basal body. The protein localises to the midbody. It localises to the lysosome. The catalysed reaction is GTP + H2O = GDP + phosphate + H(+). Its activity is regulated as follows. Regulated by guanine nucleotide exchange factors (GEFs) such as RAB3IP/Rabin8 and RPGR which promote the exchange of bound GDP for free GTP, GTPase activating proteins (GAPs) which increase the GTP hydrolysis activity, and GDP dissociation inhibitors (GDIs) which inhibit the dissociation of the nucleotide from the GTPase. Activated in response to insulin. The small GTPases Rab are key regulators of intracellular membrane trafficking, from the formation of transport vesicles to their fusion with membranes. Rabs cycle between an inactive GDP-bound form and an active GTP-bound form that is able to recruit to membranes different sets of downstream effectors directly responsible for vesicle formation, movement, tethering and fusion. RAB8A is involved in polarized vesicular trafficking and neurotransmitter release. Together with RAB11A, RAB3IP, the exocyst complex, PARD3, PRKCI, ANXA2, CDC42 and DNMBP promotes transcytosis of PODXL to the apical membrane initiation sites (AMIS), apical surface formation and lumenogenesis. Regulates the compacted morphology of the Golgi. Together with MYO5B and RAB11A participates in epithelial cell polarization. Also involved in membrane trafficking to the cilium and ciliogenesis. Together with MICALL2, may also regulate adherens junction assembly. May play a role in insulin-induced transport to the plasma membrane of the glucose transporter GLUT4 and therefore play a role in glucose homeostasis. Involved in autophagy. Participates in the export of a subset of neosynthesized proteins through a Rab8-Rab10-Rab11-dependent endososomal export route. Targeted to and stabilized on stressed lysosomes through LRRK2 phosphorylation. Suppresses stress-induced lysosomal enlargement through EHBP1 and EHNP1L1 effector proteins. This chain is Ras-related protein Rab-8A (RAB8A), found in Canis lupus familiaris (Dog).